The primary structure comprises 376 residues: Glucose-1-phosphate adenylyltransferase (376 aa).

Alpha-D-glucose 1-phosphate-binding positions include Tyr-101, Gly-166, 181-182 (EK), and Ser-192.

Belongs to the bacterial/plant glucose-1-phosphate adenylyltransferase family. In terms of assembly, homotetramer.

The enzyme catalyses alpha-D-glucose 1-phosphate + ATP + H(+) = ADP-alpha-D-glucose + diphosphate. It functions in the pathway glycan biosynthesis; glycogen biosynthesis. In terms of biological role, involved in the biosynthesis of ADP-glucose, a building block required for the elongation reactions to produce glycogen. Catalyzes the reaction between ATP and alpha-D-glucose 1-phosphate (G1P) to produce pyrophosphate and ADP-Glc. In Bacillus cereus (strain ZK / E33L), this protein is Glucose-1-phosphate adenylyltransferase.